Consider the following 65-residue polypeptide: MPKIKTVRGAAKRFKKTAGGGFKRKHANLRHILTKKSTKRKRHLRPKSQVSKGDLGLVVACLPYA.

This sequence belongs to the bacterial ribosomal protein bL35 family.

This Edwardsiella ictaluri (strain 93-146) protein is Large ribosomal subunit protein bL35.